A 413-amino-acid chain; its full sequence is L-cysteine:1D-myo-inositol 2-amino-2-deoxy-alpha-D-glucopyranoside ligase (413 aa).

The disordered stretch occupies residues 1–21 (MQSWSDTALPSVPGQGPPLRL). C43 provides a ligand contact to Zn(2+). Residues 43–46 (CGIT), T58, and 81–83 (NVT) each bind L-cysteinyl-5'-AMP. The 'HIGH' region signature appears at 45–55 (ITPYDATHLGH). Residues 187-192 (ERGGDP) carry the 'ERGGDP' region motif. W227 provides a ligand contact to L-cysteinyl-5'-AMP. Residue C231 coordinates Zn(2+). Residue 249-251 (GSD) participates in L-cysteinyl-5'-AMP binding. H256 is a binding site for Zn(2+). I283 serves as a coordination point for L-cysteinyl-5'-AMP. The 'KMSKS' region motif lies at 289–293 (KMSKS).

This sequence belongs to the class-I aminoacyl-tRNA synthetase family. MshC subfamily. As to quaternary structure, monomer. The cofactor is Zn(2+).

It catalyses the reaction 1D-myo-inositol 2-amino-2-deoxy-alpha-D-glucopyranoside + L-cysteine + ATP = 1D-myo-inositol 2-(L-cysteinylamino)-2-deoxy-alpha-D-glucopyranoside + AMP + diphosphate + H(+). In terms of biological role, catalyzes the ATP-dependent condensation of GlcN-Ins and L-cysteine to form L-Cys-GlcN-Ins. This Rhodococcus erythropolis (strain PR4 / NBRC 100887) protein is L-cysteine:1D-myo-inositol 2-amino-2-deoxy-alpha-D-glucopyranoside ligase.